The chain runs to 101 residues: DET1- and DDB1-associated protein 1 (101 aa).

Residues 67-101 (NAAKKRDQDQLEIGETSAPPRKIARTDSQEMNEDT) form a disordered region.

The protein belongs to the DDA1 family. Component of numerous DCX (DDB1-CUL4-X-box) E3 ubiquitin-protein ligase complexes which consist of a core of DDB1, cullin-4 (CUL4A or CUL4B), DDA1 and RBX1.

It participates in protein modification; protein ubiquitination. Functions as a component of numerous distinct DCX (DDB1-CUL4-X-box) E3 ubiquitin-protein ligase complexes which mediate the ubiquitination and subsequent proteasomal degradation of target proteins. In the DCX complexes, acts as a scaffolding subunit required to stabilize the complex. This is DET1- and DDB1-associated protein 1 from Xenopus laevis (African clawed frog).